A 1103-amino-acid polypeptide reads, in one-letter code: Ubiquitin carboxyl-terminal hydrolase 7 (1103 aa).

Positions 1–11 are enriched in low complexity; the sequence is MNHQQQQQQQQ. Residues 1 to 40 form a disordered region; it reads MNHQQQQQQQQKAGEQQLSEPEDMEMEAGDTDDPPRITQN. The interval 1–209 is interaction with TSPYL5; that stretch reads MNHQQQQQQQ…APHGVAWDSK (209 aa). Residue S19 is modified to Phosphoserine. Residues 20 to 32 are compositionally biased toward acidic residues; the sequence is EPEDMEMEAGDTD. S50 and S54 each carry phosphoserine. The segment at 54 to 209 is interaction with p53/TP53 and MDM2; that stretch reads SNAEEDMEDD…APHGVAWDSK (156 aa). The 128-residue stretch at 69–196 folds into the MATH domain; sequence EATFQFTVER…DDKVTFEVFV (128 aa). Residues 71-206 are necessary for nuclear localization; the sequence is TFQFTVERFS…QADAPHGVAW (136 aa). A USP domain is found at 215–522; that stretch reads VGLKNQGATC…NAYMLVYIRE (308 aa). Catalysis depends on C224, which acts as the Nucleophile. H465 acts as the Proton acceptor in catalysis. K870 carries the N6-acetyllysine; alternate modification. Residue K870 forms a Glycyl lysine isopeptide (Lys-Gly) (interchain with G-Cter in SUMO2); alternate linkage. Residue K870 forms a Glycyl lysine isopeptide (Lys-Gly) (interchain with G-Cter in ubiquitin); alternate linkage. A Glycyl lysine isopeptide (Lys-Gly) (interchain with G-Cter in SUMO2) cross-link involves residue K883. S964 carries the post-translational modification Phosphoserine. N6-acetyllysine is present on residues K1085 and K1097.

Belongs to the peptidase C19 family. As to quaternary structure, monomer. Homodimer. Part of a complex with DAXX, MDM2, RASSF1 and USP7. Part of a complex with DAXX, MDM2 and USP7. Interacts with MDM2; the interaction is independent of p53/TP53. Interacts with DAXX; the interaction is direct and independent of MDM2 and p53/TP53. Component of a complex composed of KMT2E, OGT and USP7; the complex stabilizes KMT2E, preventing KMT2E ubiquitination and proteasomal-mediated degradation. Interacts (via MATH domain) with KMT2E. Interacts with OGT. Interacts with FOXO4; the interaction is enhanced in presence of hydrogen peroxide and occurs independently of p53/TP53. Interacts with p53/TP53; the interaction is enhanced in response to DNA damage; the interaction is impaired by TSPYL5. Interacts with PTEN; the interaction is direct. Interacts with ATXN1 and the strength of interaction is influenced by the length of the poly-Gln region in ATXN1. A weaker interaction seen with mutants having longer poly-Gln regions. Interacts with KIAA1530/UVSSA. Interacts with MEX3C and antagonizes its ability to degrade mRNA. Interacts with DNMT1 and UHRF1. Interacts with FOXP3. Interacts (via MATH domain) with RNF220. Associated component of the Polycomb group (PcG) multiprotein PRC1-like complex. Interacts with EPOP. Interacts with OTUD4 and USP9X; the interaction is direct. Interacts with CRY2. Interacts with REST. Interacts with ERCC6. Part of a complex consisting of USP7, MAGEL2 and TRIM27; directly interacts with MAGEL2; directly interacts with TRIM27. In terms of processing, polyneddylated. Not sumoylated. Post-translationally, ubiquitinated at Lys-870. Polyubiquitinated. In terms of tissue distribution, strongly expressed in the testis, spleen and brain. Weakly expressed in the stomach, small intestine, skeletal muscle and uterus.

The protein resides in the nucleus. It localises to the cytoplasm. Its subcellular location is the PML body. The protein localises to the chromosome. It catalyses the reaction Thiol-dependent hydrolysis of ester, thioester, amide, peptide and isopeptide bonds formed by the C-terminal Gly of ubiquitin (a 76-residue protein attached to proteins as an intracellular targeting signal).. Hydrolase that deubiquitinates target proteins such as ARMC5, FOXO4, DEPTOR, KAT5, p53/TP53, MDM2, ERCC6, DNMT1, UHRF1, PTEN, KMT2E/MLL5 and DAXX. Together with DAXX, prevents MDM2 self-ubiquitination and enhances the E3 ligase activity of MDM2 towards p53/TP53, thereby promoting p53/TP53 ubiquitination and proteasomal degradation. Deubiquitinates p53/TP53, preventing degradation of p53/TP53, and enhances p53/TP53-dependent transcription regulation, cell growth repression and apoptosis. Deubiquitinates p53/TP53 and MDM2 and strongly stabilizes p53/TP53 even in the presence of excess MDM2, and also induces p53/TP53-dependent cell growth repression and apoptosis. Deubiquitination of FOXO4 in presence of hydrogen peroxide is not dependent on p53/TP53 and inhibits FOXO4-induced transcriptional activity. In association with DAXX, is involved in the deubiquitination and translocation of PTEN from the nucleus to the cytoplasm, both processes that are counteracted by PML. Deubiquitinates KMT2E preventing KMT2E proteasomal-mediated degradation. Involved in cell proliferation during early embryonic development. Involved in transcription-coupled nucleotide excision repair (TC-NER) in response to UV damage: recruited to DNA damage sites following interaction with KIAA1530/UVSSA and promotes deubiquitination of ERCC6, preventing UV-induced degradation of ERCC6. Involved in maintenance of DNA methylation via its interaction with UHRF1 and DNMT1: acts by mediating deubiquitination of UHRF1 and DNMT1, preventing their degradation and promoting DNA methylation by DNMT1. Deubiquitinates alkylation repair enzyme ALKBH3. OTUD4 recruits USP7 and USP9X to stabilize ALKBH3, thereby promoting the repair of alkylated DNA lesions. Acts as a chromatin regulator via its association with the Polycomb group (PcG) multiprotein PRC1-like complex; may act by deubiquitinating components of the PRC1-like complex. Able to mediate deubiquitination of histone H2B; it is however unsure whether this activity takes place in vivo. Exhibits a preference towards 'Lys-48'-linked ubiquitin chains. Increases regulatory T-cells (Treg) suppressive capacity by deubiquitinating and stabilizing transcription factor FOXP3 which is crucial for Treg cell function. Plays a role in the maintenance of the circadian clock periodicity via deubiquitination and stabilization of the CRY1 and CRY2 proteins. Deubiquitinates REST, thereby stabilizing REST and promoting the maintenance of neural progenitor cells. Deubiquitinates SIRT7, inhibiting SIRT7 histone deacetylase activity and regulating gluconeogenesis. Involved in the regulation of WASH-dependent actin polymerization at the surface of endosomes and the regulation of endosomal protein recycling. It maintains optimal WASH complex activity and precise F-actin levels via deubiquitination of TRIM27 and WASHC1. Mediates the deubiquitination of phosphorylated DEPTOR, promoting its stability and leading to decreased mTORC1 signaling. In Rattus norvegicus (Rat), this protein is Ubiquitin carboxyl-terminal hydrolase 7 (Usp7).